A 718-amino-acid chain; its full sequence is Cyclomaltodextrin glucanotransferase (718 aa).

The signal sequence occupies residues 1–34 (MFQMAKRVLLSTTLTFSLLAGSALPFLPASAIYA). Positions 35–172 (DADTAVTNKQ…GIKIIIDFAP (138 aa)) are A1. Residues Asp-61, Asn-63, Asn-66, and Asn-67 each coordinate Ca(2+). An intrachain disulfide couples Cys-77 to Cys-84. The Ca(2+) site is built by Gly-85 and Asp-87. A substrate-binding site is contributed by 134–135 (YW). Position 173 (Asn-173) interacts with Ca(2+). The segment at 173-236 (NHTSPAMETD…NLYDLADLNH (64 aa)) is b. A substrate-binding site is contributed by His-174. Ile-224 lines the Ca(2+) pocket. 227–230 (NLYD) contributes to the substrate binding site. Asp-233 is a Ca(2+) binding site. The interval 237–440 (NNSTIDTYFK…LRKSNPAIAY (204 aa)) is A2. Arg-261 lines the substrate pocket. The Nucleophile role is filled by Asp-263. Residue 266-267 (KH) coordinates substrate. His-267 contributes to the Ca(2+) binding site. Residue Glu-291 is the Proton donor of the active site. The substrate site is built by His-361, Asp-405, and Arg-409. The tract at residues 441–528 (GSTQQRWINN…ATAVWQYTAS (88 aa)) is c. The tract at residues 529-614 (ETTPTIGHVG…SNAYNDFTIL (86 aa)) is d. Positions 532 to 612 (PTIGHVGPVM…VNSNAYNDFT (81 aa)) constitute an IPT/TIG domain. The CBM20 domain maps to 613 to 718 (ILSGDQVSVR…GTATVTINWQ (106 aa)). The segment at 615–718 (SGDQVSVRFV…GTATVTINWQ (104 aa)) is e.

The protein belongs to the glycosyl hydrolase 13 family. In terms of assembly, monomer. The cofactor is Ca(2+).

It localises to the secreted. The catalysed reaction is Cyclizes part of a (1-&gt;4)-alpha-D-glucan chain by formation of a (1-&gt;4)-alpha-D-glucosidic bond.. The polypeptide is Cyclomaltodextrin glucanotransferase (cgtA) (Bacillus licheniformis).